The chain runs to 347 residues: UDP-glucose 4-epimerase (347 aa).

NAD(+)-binding positions include 11–13, 32–36, 65–66, Phe-87, and Lys-91; these read GYI, DNFHN, and DI. 131–133 contributes to the substrate binding site; it reads SAT. Tyr-156 serves as the catalytic Proton acceptor. Positions 160 and 184 each coordinate NAD(+). Substrate is bound by residues 184–186, 205–207, 223–225, Arg-238, and 299–302; these read YFN, NNL, NVF, and REGD.

This sequence belongs to the NAD(P)-dependent epimerase/dehydratase family. Homodimer. Requires NAD(+) as cofactor.

The enzyme catalyses UDP-alpha-D-glucose = UDP-alpha-D-galactose. It catalyses the reaction UDP-N-acetyl-alpha-D-glucosamine = UDP-N-acetyl-alpha-D-galactosamine. It participates in carbohydrate metabolism; galactose metabolism. Catalyzes two distinct but analogous reactions: the reversible epimerization of UDP-glucose to UDP-galactose and the reversible epimerization of UDP-N-acetylglucosamine to UDP-N-acetylgalactosamine. The reaction with UDP-Gal plays a critical role in the Leloir pathway of galactose catabolism in which galactose is converted to the glycolytic intermediate glucose 6-phosphate. It contributes to the catabolism of dietary galactose and enables the endogenous biosynthesis of both UDP-Gal and UDP-GalNAc when exogenous sources are limited. Both UDP-sugar interconversions are important in the synthesis of glycoproteins and glycolipids. The polypeptide is UDP-glucose 4-epimerase (Gale) (Mus musculus (Mouse)).